Consider the following 632-residue polypeptide: Actin-related protein 8 (632 aa).

The segment covering 1–30 has biased composition (basic and acidic residues); the sequence is MTQAEREQENGKEKEKEREKEKEKEKEQRG. The tract at residues 1–43 is disordered; it reads MTQAEREQENGKEKEKEREKEKEKEKEQRGIKRPIAPPVIPEP. Residue 288-291 coordinates ATP; the sequence is DVGD. Disordered regions lie at residues 410-429 and 434-494; these read MTSL…DEHY and QSKQ…GGAE. Residues 434–443 show a composition bias toward low complexity; that stretch reads QSKQDQSSKA.

The protein belongs to the actin family. ARP8 subfamily. In terms of assembly, component of the chromatin remodeling INO80 complex; specifically part of a complex module associated with the DBINO domain of INO80. Exists as monomers and dimers, but the dimer is most probably the biologically relevant form required for stable interactions with histones that exploits the twofold symmetry of the nucleosome core.

Its subcellular location is the nucleus. It localises to the chromosome. In terms of biological role, plays an important role in the functional organization of mitotic chromosomes. Exhibits low basal ATPase activity, and unable to polymerize. Its function is as follows. Proposed core component of the chromatin remodeling INO80 complex which is involved in transcriptional regulation, DNA replication and probably DNA repair. Required for the recruitment of INO80 (and probably the INO80 complex) to sites of DNA damage Strongly prefer nucleosomes and H3-H4 tetramers over H2A-H2B dimers, suggesting it may act as a nucleosome recognition module within the complex. This chain is Actin-related protein 8 (actr8), found in Salmo salar (Atlantic salmon).